Reading from the N-terminus, the 397-residue chain is Dual-specificity RNA methyltransferase RlmN (397 aa).

Glu-130 functions as the Proton acceptor in the catalytic mechanism. One can recognise a Radical SAM core domain in the interval 138 to 377 (VEDRGAVCIS…ASPIRTPRGR (240 aa)). Cys-145 and Cys-383 form a disulfide bridge. Residues Cys-152, Cys-156, and Cys-159 each contribute to the [4Fe-4S] cluster site. S-adenosyl-L-methionine-binding positions include 209 to 210 (GE), Ser-241, 263 to 265 (SLH), and Asn-340. Cys-383 (S-methylcysteine intermediate) is an active-site residue.

The protein belongs to the radical SAM superfamily. RlmN family. Requires [4Fe-4S] cluster as cofactor.

Its subcellular location is the cytoplasm. The catalysed reaction is adenosine(2503) in 23S rRNA + 2 reduced [2Fe-2S]-[ferredoxin] + 2 S-adenosyl-L-methionine = 2-methyladenosine(2503) in 23S rRNA + 5'-deoxyadenosine + L-methionine + 2 oxidized [2Fe-2S]-[ferredoxin] + S-adenosyl-L-homocysteine. It carries out the reaction adenosine(37) in tRNA + 2 reduced [2Fe-2S]-[ferredoxin] + 2 S-adenosyl-L-methionine = 2-methyladenosine(37) in tRNA + 5'-deoxyadenosine + L-methionine + 2 oxidized [2Fe-2S]-[ferredoxin] + S-adenosyl-L-homocysteine. In terms of biological role, specifically methylates position 2 of adenine 2503 in 23S rRNA and position 2 of adenine 37 in tRNAs. m2A2503 modification seems to play a crucial role in the proofreading step occurring at the peptidyl transferase center and thus would serve to optimize ribosomal fidelity. The protein is Dual-specificity RNA methyltransferase RlmN of Granulibacter bethesdensis (strain ATCC BAA-1260 / CGDNIH1).